We begin with the raw amino-acid sequence, 533 residues long: WD repeat-containing protein JIP5 (533 aa).

5 WD repeats span residues 26-67, 84-130, 176-215, 264-309, and 372-409; these read NYSD…EKQS, GKVS…GSCR, NSNDSITKLCHSATNSCLLAGTENGHVLVYDSKNLGGSKL, NQDD…FMDQ, and GAADEVGLLEIDYDYRLISAGMESLKIWSNEQNEEIAL. 2 stretches are compositionally biased toward acidic residues: residues 408-428 and 437-452; these read ALDESDDSDDESDSDNSEDDL and ASDEEIEENKEEEDEK. Positions 408 to 533 are disordered; sequence ALDESDDSDD…EHGIRRFDDL (126 aa). Composition is skewed to basic and acidic residues over residues 453-463 and 521-533; these read EDKPVKIDHPL and QKHEHGIRRFDDL.

The protein belongs to the WD repeat WDR55 family.

Its subcellular location is the nucleus. The protein localises to the nucleolus. In Scheffersomyces stipitis (strain ATCC 58785 / CBS 6054 / NBRC 10063 / NRRL Y-11545) (Yeast), this protein is WD repeat-containing protein JIP5 (JIP5).